We begin with the raw amino-acid sequence, 29 residues long: Trypsin inhibitor 3 (29 aa).

Intrachain disulfides connect cysteine 3-cysteine 20, cysteine 10-cysteine 22, and cysteine 16-cysteine 28.

This sequence belongs to the protease inhibitor I7 (squash-type serine protease inhibitor) family.

It is found in the secreted. Inhibits trypsin. The protein is Trypsin inhibitor 3 of Luffa aegyptiaca (Sponge gourd).